Consider the following 534-residue polypeptide: UDP-glucuronosyltransferase 1A5 (534 aa).

The N-terminal stretch at 1–28 is a signal peptide; the sequence is MATGLQVPLPQLATGLLLLLSVQPWAES. N-linked (GlcNAc...) asparagine glycosylation is found at asparagine 119, asparagine 296, and asparagine 348. A helical membrane pass occupies residues 492-508; sequence VIGFLLAVVLTVAFITF.

Belongs to the UDP-glycosyltransferase family. In terms of assembly, homodimer. Homooligomer. Interacts with UGT1A1, UGT1A3, UGT1A4, UGT1A6, UGT1A7, UGT1A8, UGT1A9 and UGT1A10 to form heterodimers. Isoform 1 interacts with isoform 2/i2 suggesting that oligomerization is involved in negative regulation of transferase activity by isoform 2. Isoform 1 also interacts with respective i2 isoforms of UGT1A1, UGT1A3, UGT1A4, UGT1A6, UGT1A7, UGT1A8, UGT1A9 and UGT1A10. In terms of tissue distribution, isoform 1 and isoform 2 are expressed in colon and small intestine. Neither isoform is expressed in liver, kidney or esophagus.

The protein resides in the endoplasmic reticulum membrane. It catalyses the reaction glucuronate acceptor + UDP-alpha-D-glucuronate = acceptor beta-D-glucuronoside + UDP + H(+). It carries out the reaction zolasartan + UDP-alpha-D-glucuronate = zolarsartan-1-N-beta-D-glucuronide + UDP. Its function is as follows. UDP-glucuronosyltransferase (UGT) that catalyzes phase II biotransformation reactions in which lipophilic substrates are conjugated with glucuronic acid to increase the metabolite's water solubility, thereby facilitating excretion into either the urine or bile. Essential for the elimination and detoxification of drugs, xenobiotics and endogenous compounds. Involved in the glucuronidation of the AGTR1 angiotensin receptor antagonist zolarsatan, a drug which can inhibit the effect of angiotensin II. Functionally, lacks UGT glucuronidation activity but acts as a negative regulator of isoform 1. The chain is UDP-glucuronosyltransferase 1A5 from Homo sapiens (Human).